A 463-amino-acid chain; its full sequence is Fumarate hydratase class II (463 aa).

Residues Ser-98–Thr-100, His-129–Asp-132, Ser-139–Asn-141, and Thr-187 each bind substrate. His-188 functions as the Proton donor/acceptor in the catalytic mechanism. The active site involves Ser-318. Substrate contacts are provided by residues Ser-319 and Lys-324–Asn-326.

Belongs to the class-II fumarase/aspartase family. Fumarase subfamily. Homotetramer.

Its subcellular location is the cytoplasm. It catalyses the reaction (S)-malate = fumarate + H2O. It functions in the pathway carbohydrate metabolism; tricarboxylic acid cycle; (S)-malate from fumarate: step 1/1. Involved in the TCA cycle. Catalyzes the stereospecific interconversion of fumarate to L-malate. The chain is Fumarate hydratase class II from Brucella melitensis biotype 1 (strain ATCC 23456 / CCUG 17765 / NCTC 10094 / 16M).